A 332-amino-acid chain; its full sequence is D-xylose-binding periplasmic protein (332 aa).

The first 23 residues, 1 to 23, serve as a signal peptide directing secretion; it reads MKIKSALLTLVGALTVFSSSAHS.

Belongs to the bacterial solute-binding protein 2 family.

The protein localises to the periplasm. Functionally, involved in the high-affinity D-xylose membrane transport system. Binds with high affinity to xylose. The chain is D-xylose-binding periplasmic protein (xylF) from Haemophilus influenzae (strain ATCC 51907 / DSM 11121 / KW20 / Rd).